Here is a 345-residue protein sequence, read N- to C-terminus: Protease HtpX homolog (345 aa).

Transmembrane regions (helical) follow at residues 6-26 (TAML…LVGG) and 27-47 (SNGM…SYWN). H130 lines the Zn(2+) pocket. E131 is an active-site residue. H134 provides a ligand contact to Zn(2+). The next 2 helical transmembrane spans lie at 145–165 (LTAT…FMGG) and 179–199 (IGGL…QMAI). Position 204 (E204) interacts with Zn(2+).

The protein belongs to the peptidase M48B family. Zn(2+) serves as cofactor.

Its subcellular location is the cell inner membrane. The sequence is that of Protease HtpX homolog from Bartonella henselae (strain ATCC 49882 / DSM 28221 / CCUG 30454 / Houston 1) (Rochalimaea henselae).